A 513-amino-acid polypeptide reads, in one-letter code: MKLTVWTYEGPPHVGAMRVATGMKGLHYVLHAPQGDTYADLLFTMIERRDHRPPVTYTTFQARDLGSDTADLFKQTLQDAYDRFQPEALIVGASCTAELIQDDPGGMSETMGIPIPVIPLELPSYQRKENFGADETFFQIVRTLAKPMARTKQITCNLIGPTALGFRHRDDITELTGLLSDMGISVNVVAPMDATPTDIARIGAAHFNVLMYPETAETAARWMERELGQPYTKTVPIGVGATRDFIAEVAQIAGVAPYLDDSRLRLPWYSRSVDSTYLTGKRVFLFGDGTHVIAAARIARDEMGFEVVGLGCYNREMARPVRALARDFGIEALITDDYLEVESRIEALQPEMILGTQMERHIGKRLGIPCAVISAPVHVQDFPARYSPQMGVEGANVIFDTWVHPLVMGLEEHLLHMFRDDFEFHDAAGPSHHGGHSPKPQAAEPAPQAAPQPENTGTSVEVVWLADAERELKKIPFFVRGKARRNTETFASERGVGEISVDTLYEAKAHYAR.

[4Fe-4S] cluster is bound at residue aspartate 36. Residue aspartate 274 is the Proton donor of the active site. Position 409–410 (409–410 (GL)) interacts with substrate. Positions 426–457 (DAAGPSHHGGHSPKPQAAEPAPQAAPQPENTG) are disordered. Residues 440-454 (PQAAEPAPQAAPQPE) are compositionally biased toward low complexity.

It belongs to the ChlB/BchB/BchZ family. As to quaternary structure, protochlorophyllide reductase is composed of three subunits; BchL, BchN and BchB. Forms a heterotetramer of two BchB and two BchN subunits. The cofactor is [4Fe-4S] cluster.

The enzyme catalyses chlorophyllide a + oxidized 2[4Fe-4S]-[ferredoxin] + 2 ADP + 2 phosphate = protochlorophyllide a + reduced 2[4Fe-4S]-[ferredoxin] + 2 ATP + 2 H2O. Its pathway is porphyrin-containing compound metabolism; bacteriochlorophyll biosynthesis (light-independent). Its function is as follows. Component of the dark-operative protochlorophyllide reductase (DPOR) that uses Mg-ATP and reduced ferredoxin to reduce ring D of protochlorophyllide (Pchlide) to form chlorophyllide a (Chlide). This reaction is light-independent. The NB-protein (BchN-BchB) is the catalytic component of the complex. This is Light-independent protochlorophyllide reductase subunit B from Roseobacter denitrificans (strain ATCC 33942 / OCh 114) (Erythrobacter sp. (strain OCh 114)).